A 187-amino-acid polypeptide reads, in one-letter code: GTP cyclohydrolase 1 (187 aa).

Positions 76, 79, and 148 each coordinate Zn(2+).

It belongs to the GTP cyclohydrolase I family. In terms of assembly, toroid-shaped homodecamer, composed of two pentamers of five dimers.

It catalyses the reaction GTP + H2O = 7,8-dihydroneopterin 3'-triphosphate + formate + H(+). The protein operates within cofactor biosynthesis; 7,8-dihydroneopterin triphosphate biosynthesis; 7,8-dihydroneopterin triphosphate from GTP: step 1/1. In Streptococcus agalactiae serotype III (strain NEM316), this protein is GTP cyclohydrolase 1.